A 382-amino-acid polypeptide reads, in one-letter code: Protein phosphatase 1A (382 aa).

The N-myristoyl glycine moiety is linked to residue Gly-2. A PPM-type phosphatase domain is found at 23–291 (RYGLSSMQGW…DNMSVILICF (269 aa)). Mn(2+) contacts are provided by Asp-60, Gly-61, Asp-239, and Asp-282. Phosphoserine is present on residues Ser-375 and Ser-377.

It belongs to the PP2C family. In terms of assembly, monomer. Interacts with SMAD2; the interaction dephosphorylates SMAD2 in its C-terminal SXS motif resulting in disruption of the SMAD2/SMAD4 complex, SMAD2 nuclear export and termination of the TGF-beta-mediated signaling. Interacts with SMAD2; the interaction dephosphorylates SMAD2 in its C-terminal SXS motif resulting in disruption of the SMAD2/SMAD4 complex, SMAD2 nuclear export and termination of the TGF-beta-mediated signaling. Interacts with the phosphorylated form of IKBKB/IKKB. Mg(2+) is required as a cofactor. The cofactor is Mn(2+). N-myristoylation is essential for the recognition of its substrates for dephosphorylation.

It localises to the nucleus. The protein resides in the cytoplasm. The protein localises to the cytosol. It is found in the membrane. It catalyses the reaction O-phospho-L-seryl-[protein] + H2O = L-seryl-[protein] + phosphate. It carries out the reaction O-phospho-L-threonyl-[protein] + H2O = L-threonyl-[protein] + phosphate. Functionally, enzyme with a broad specificity. Negatively regulates TGF-beta signaling through dephosphorylating SMAD2 and SMAD3, resulting in their dissociation from SMAD4, nuclear export of the SMADs and termination of the TGF-beta-mediated signaling. Dephosphorylates PRKAA1 and PRKAA2. Plays an important role in the termination of TNF-alpha-mediated NF-kappa-B activation through dephosphorylating and inactivating IKBKB/IKKB. The protein is Protein phosphatase 1A (PPM1A) of Oryctolagus cuniculus (Rabbit).